The primary structure comprises 438 residues: uncharacterized protein (438 aa).

The N-terminal stretch at 1–19 (MKKLLLAASIICLASAGLA) is a signal peptide.

This is an uncharacterized protein from Rickettsia conorii (strain ATCC VR-613 / Malish 7).